We begin with the raw amino-acid sequence, 274 residues long: NH(3)-dependent NAD(+) synthetase (274 aa).

An ATP-binding site is contributed by 46–53; the sequence is GISGGQDS. Asp-52 contributes to the Mg(2+) binding site. Residue Arg-140 participates in deamido-NAD(+) binding. Residue Thr-160 coordinates ATP. Glu-165 serves as a coordination point for Mg(2+). Lys-173 and Asp-180 together coordinate deamido-NAD(+). Residues Lys-189 and Thr-211 each coordinate ATP. Residue 260 to 261 participates in deamido-NAD(+) binding; that stretch reads HK.

The protein belongs to the NAD synthetase family. In terms of assembly, homodimer.

It catalyses the reaction deamido-NAD(+) + NH4(+) + ATP = AMP + diphosphate + NAD(+) + H(+). The protein operates within cofactor biosynthesis; NAD(+) biosynthesis; NAD(+) from deamido-NAD(+) (ammonia route): step 1/1. Functionally, catalyzes the ATP-dependent amidation of deamido-NAD to form NAD. Uses ammonia as a nitrogen source. This Sodalis glossinidius (strain morsitans) protein is NH(3)-dependent NAD(+) synthetase.